A 429-amino-acid chain; its full sequence is DNA polymerase delta small subunit (429 aa).

The protein belongs to the DNA polymerase delta/II small subunit family. As to quaternary structure, heterodimer with subunits of 125 kDa and 50 kDa.

The protein resides in the nucleus. It catalyses the reaction DNA(n) + a 2'-deoxyribonucleoside 5'-triphosphate = DNA(n+1) + diphosphate. In terms of biological role, the function of the small subunit is not yet clear. This is DNA polymerase delta small subunit (POLD2) from Oryza sativa subsp. japonica (Rice).